The following is a 47-amino-acid chain: Defensin-like protein 1 (47 aa).

Intrachain disulfides connect Cys-3-Cys-47, Cys-14-Cys-34, Cys-20-Cys-41, and Cys-24-Cys-43.

Monomer and homodimer.

Its function is as follows. Inhibits trypsin but not chymotrypsin. The sequence is that of Defensin-like protein 1 from Vigna unguiculata (Cowpea).